Reading from the N-terminus, the 92-residue chain is Mediator-associated protein 3 (92 aa).

The DEK-C domain occupies Lys13 to Glu70.

In terms of assembly, associated with the Mediator complex.

It is found in the nucleus. The sequence is that of Mediator-associated protein 3 from Arabidopsis thaliana (Mouse-ear cress).